The following is a 655-amino-acid chain: Ribonuclease 3 (655 aa).

2 disordered regions span residues 1 to 148 (MENL…NSEK) and 171 to 376 (LIAP…NIPL). Residues 1-400 (MENLEKNTKK…NYIKDNYPVI (400 aa)) form a unknown region. Over residues 8 to 20 (TKKKIKKPNNFKK) the composition is skewed to basic residues. Basic and acidic residues-rich tracts occupy residues 21–34 (NNKDKTEELKDKPT) and 69–89 (DYEKKIREIQAKEAKKIRSDE). The segment covering 92–102 (NNNSKKQNNNK) has biased composition (low complexity). A compositionally biased stretch (basic residues) spans 103–115 (QAKKKANKNKKQK). Residues 135–148 (AANNQVKAIPNSEK) show a composition bias toward polar residues. A compositionally biased stretch (low complexity) spans 206–223 (NNFVNNQKNHNKNNAGNK). 2 stretches are compositionally biased toward polar residues: residues 229–242 (PTKPLNQSKLSKST) and 250–259 (PNFTSNQPKP). 2 stretches are compositionally biased toward basic and acidic residues: residues 260-274 (TQKEDSKKVKAKKAE) and 298-309 (DQTKKKQPKENK). Over residues 310 to 332 (NQQIKAVNLNNNQQKTNNNNQKN) the composition is skewed to low complexity. The span at 333–350 (SVDKSENDNNKKKSEANQ) shows a compositional bias: basic and acidic residues. Positions 351–360 (KQENLNPNNN) are enriched in low complexity. An RNase 3 region spans residues 401-655 (YADLKEKNRL…KFRGLLKLEK (255 aa)). The 125-residue stretch at 432 to 556 (LELLLKKFKV…FIGAMYLDQG (125 aa)) folds into the RNase III domain. Glutamate 472 is a Mg(2+) binding site. Residue aspartate 476 is part of the active site. The Mg(2+) site is built by aspartate 542 and glutamate 545. The active site involves glutamate 545. Positions 582–649 (DYKSIFQEII…AKEAISKFRG (68 aa)) constitute a DRBM domain.

It belongs to the ribonuclease III family. In terms of assembly, homodimer. The cofactor is Mg(2+).

It localises to the cytoplasm. The enzyme catalyses Endonucleolytic cleavage to 5'-phosphomonoester.. In terms of biological role, digests double-stranded RNA. Involved in the processing of primary rRNA transcript to yield the immediate precursors to the large and small rRNAs (23S and 16S). Processes some mRNAs, and tRNAs when they are encoded in the rRNA operon. Processes pre-crRNA and tracrRNA of type II CRISPR loci if present in the organism. This is Ribonuclease 3 (rnc) from Mycoplasmoides gallisepticum (strain R(low / passage 15 / clone 2)) (Mycoplasma gallisepticum).